The primary structure comprises 360 residues: Type II methyltransferase M.BglII (360 aa).

The disordered stretch occupies residues 316–341 (TRQRKGSKPSLDSKAHPEEHHKKEIV). Residues 326-341 (LDSKAHPEEHHKKEIV) are compositionally biased toward basic and acidic residues.

This sequence belongs to the N(4)/N(6)-methyltransferase family. N(4) subfamily.

It carries out the reaction a 2'-deoxycytidine in DNA + S-adenosyl-L-methionine = an N(4)-methyl-2'-deoxycytidine in DNA + S-adenosyl-L-homocysteine + H(+). A beta subtype methylase, recognizes the double-stranded sequence 5'-AGATCT-3', methylates C-5 on both strands, and protects the DNA from cleavage by the BglII endonuclease. The chain is Type II methyltransferase M.BglII from Bacillus subtilis.